A 95-amino-acid chain; its full sequence is Antitoxin TacA1 (95 aa).

Residues 59-95 form a neutralization domain region; sequence FNFNDEQYEEFINLLDAPVADDPVIEKLLARKPQWDV.

Belongs to the TacA antitoxin family. In terms of assembly, homodimer. Forms a complex with cognate toxin TacT1. Forms a 4:2 antitoxin:toxin complex with cognate toxin TacT1.

Antitoxin component of a type II toxin-antitoxin (TA) system. Counteracts the toxic effect of cognate toxin TacT1 (T8), but not TacT2 or TacT3. Plays a role in persister cell formation. Its function is as follows. The TacA1-TacT1 complex binds (and probably represses) its own promoter DNA but not that of tacA3-tacT3, it does not repress the tacA3-tacT3 promoter. This is Antitoxin TacA1 from Salmonella typhimurium (strain 14028s / SGSC 2262).